The sequence spans 359 residues: 3-isopropylmalate dehydrogenase (359 aa).

4 residues coordinate substrate: arginine 96, arginine 106, arginine 134, and aspartate 223. Positions 223, 247, and 251 each coordinate Mg(2+). An NAD(+)-binding site is contributed by 281–293 (GSAPDIAGQGIAN).

It belongs to the isocitrate and isopropylmalate dehydrogenases family. LeuB type 1 subfamily. In terms of assembly, homodimer. Mg(2+) serves as cofactor. Mn(2+) is required as a cofactor.

The protein localises to the cytoplasm. The enzyme catalyses (2R,3S)-3-isopropylmalate + NAD(+) = 4-methyl-2-oxopentanoate + CO2 + NADH. Its pathway is amino-acid biosynthesis; L-leucine biosynthesis; L-leucine from 3-methyl-2-oxobutanoate: step 3/4. Functionally, catalyzes the oxidation of 3-carboxy-2-hydroxy-4-methylpentanoate (3-isopropylmalate) to 3-carboxy-4-methyl-2-oxopentanoate. The product decarboxylates to 4-methyl-2 oxopentanoate. The protein is 3-isopropylmalate dehydrogenase of Chromohalobacter salexigens (strain ATCC BAA-138 / DSM 3043 / CIP 106854 / NCIMB 13768 / 1H11).